The primary structure comprises 1069 residues: ISWI chromatin-remodeling complex ATPase CHR17 (1069 aa).

The span at 1–10 (MARASKREVS) shows a compositional bias: basic and acidic residues. 2 disordered regions span residues 1–93 (MARA…KEMQ) and 136–168 (FAKS…EECL). Acidic residues-rich tracts occupy residues 15–37 (YSSE…DELE) and 45–78 (SDEE…DEEK). Basic and acidic residues predominate over residues 79–93 (AEISKREKARLKEMQ). A compositionally biased stretch (basic residues) spans 146 to 156 (KKGKGRGRHSS). Positions 206–371 (IRLYENGING…WALLNFLLPE (166 aa)) constitute a Helicase ATP-binding domain. 219-226 (DEMGLGKT) lines the ATP pocket. Residues 322-325 (DEAH) carry the DEAH box motif. In terms of domain architecture, Helicase C-terminal spans 499-650 (LLDKLLPKLK…ALVIQQGRLA (152 aa)). SANT domains are found at residues 845–897 (EGFS…VRYK) and 946–1007 (QNKG…DTLI). The interval 1016–1069 (EFDERERQARKEKKLSKSATPSKRPSGRQANESPSSLLKKRKQLSMDDYGKRRK) is disordered. Residues 1032-1051 (KSATPSKRPSGRQANESPSS) show a composition bias toward polar residues. Positions 1059–1069 (LSMDDYGKRRK) are enriched in basic and acidic residues.

Belongs to the SNF2/RAD54 helicase family. ISWI subfamily. Interacts with RLT1. Binds to FGT1. As to expression, highly expressed in growing tissues such as inflorescence and flower meristems, young leaves and floral organs. Expressed in roots, rosette and cauline leaves, stems, flowers, inflorescences and siliques.

It is found in the nucleus. Its function is as follows. Possesses intrinsic ATP-dependent nucleosome-remodeling activity. Constitutes the catalytic subunit of several complexes capable of forming ordered nucleosome arrays on chromatin. Involved in the formation of nucleosome distribution patterns. Required for the maintenance of the plant vegetative phase. In association with RLT1 or RLT2 may prevent the early activation of the vegetative-to-reproductive transition by regulating key genes that contribute to flower timing, such as FT, SEP1, SEP3, AGL8/FUL, SOC1 and FLC. Necessary to acquire heat stress (HS) memory. The chain is ISWI chromatin-remodeling complex ATPase CHR17 from Arabidopsis thaliana (Mouse-ear cress).